Here is an 835-residue protein sequence, read N- to C-terminus: Neuroligin-2 (835 aa).

The N-terminal stretch at 1 to 14 (MWLLALCLVGLAGA) is a signal peptide. The Extracellular segment spans residues 15-677 (QRGGGGPGGG…DSRDYSTELS (663 aa)). Residues asparagine 98 and asparagine 136 are each glycosylated (N-linked (GlcNAc...) asparagine). 3 cysteine pairs are disulfide-bonded: cysteine 106/cysteine 141, cysteine 317/cysteine 328, and cysteine 487/cysteine 521. N-linked (GlcNAc...) asparagine glycosylation occurs at asparagine 522. The segment at 623–668 (PPYATRWPPRPPAGAPGTRRPPPPATLPPEPEPEPGPRAYDRFPGD) is disordered. The segment covering 630 to 658 (PPRPPAGAPGTRRPPPPATLPPEPEPEPG) has biased composition (pro residues). A helical membrane pass occupies residues 678-698 (VTVAVGASLLFLNILAFAALY). Residues 678-698 (VTVAVGASLLFLNILAFAALY) form a required for interaction with LHFPL4 region. The Cytoplasmic portion of the chain corresponds to 699-835 (YKRDRRQELR…LPHPHSTTRV (137 aa)). Residues serine 713 and serine 718 each carry the phosphoserine modification. The segment at 790–835 (LLPSGLGPPPPPPPPSLHPFGPFPPPPPTATSHNNTLPHPHSTTRV) is disordered. The span at 795-818 (LGPPPPPPPPSLHPFGPFPPPPPT) shows a compositional bias: pro residues. The segment covering 823-835 (NNTLPHPHSTTRV) has biased composition (polar residues).

It belongs to the type-B carboxylesterase/lipase family. As to quaternary structure, interacts with neurexins NRXN1, NRXN2 and NRXN3. Interaction with neurexins is mediated by heparan sulfate glycan modification on neurexin. Interacts (via its C-terminus) with DLG4/PSD-95 (via PDZ domain 3). Interacts with PATJ. Interacts with GPHN. Interacts with MDGA1 and MDGA2. Found in a complex with MAGI2 and IGSF9B, where it interacts with MAGI2 (via WW 1, WW 2 and PDZ 2 domains). Identified in a complex of 720 kDa composed of LHFPL4, NLGN2, GABRA1, GABRB2, GABRG2 and GABRB3. Interacts with LHFPL4; leading to mutual regulation of the protein level and synaptic clustering. Interacts with NLGN2. In terms of tissue distribution, expressed in the blood vessel walls. Detected in colon, brain and pancreas islets of Langerhans (at protein level). Detected in brain, and at lower levels in pancreas islet beta cells.

Its subcellular location is the cell membrane. The protein localises to the postsynaptic cell membrane. It is found in the presynaptic cell membrane. Transmembrane scaffolding protein involved in cell-cell interactions via its interactions with neurexin family members. Mediates cell-cell interactions both in neurons and in other types of cells, such as Langerhans beta cells. Plays a role in synapse function and synaptic signal transmission, especially via gamma-aminobutyric acid receptors (GABA(A) receptors). Functions by recruiting and clustering synaptic proteins. Promotes clustering of postsynaptic GABRG2 and GPHN. Promotes clustering of postsynaptic LHFPL4. Modulates signaling by inhibitory synapses, and thereby plays a role in controlling the ratio of signaling by excitatory and inhibitory synapses and information processing. Required for normal signal amplitude from inhibitory synapses, but is not essential for normal signal frequency. May promote the initial formation of synapses, but is not essential for this. In vitro, triggers the de novo formation of presynaptic structures. Mediates cell-cell interactions between Langerhans beta cells and modulates insulin secretion. The polypeptide is Neuroligin-2 (NLGN2) (Homo sapiens (Human)).